Reading from the N-terminus, the 353-residue chain is UPF0283 membrane protein YpsIP31758_1791 (353 aa).

The next 3 helical transmembrane spans lie at 71-91, 101-121, and 214-234; these read MVTA…VQWV, IALG…GSVV, and ESAL…FIAW.

Belongs to the UPF0283 family.

Its subcellular location is the cell inner membrane. The protein is UPF0283 membrane protein YpsIP31758_1791 of Yersinia pseudotuberculosis serotype O:1b (strain IP 31758).